A 161-amino-acid polypeptide reads, in one-letter code: 6,7-dimethyl-8-ribityllumazine synthase (161 aa).

5-amino-6-(D-ribitylamino)uracil is bound by residues Trp-31, 65–67 (TFE), and 89–91 (CVV). (2S)-2-hydroxy-3-oxobutyl phosphate is bound at residue 94–95 (DT). Catalysis depends on His-97, which acts as the Proton donor. Residue Phe-122 coordinates 5-amino-6-(D-ribitylamino)uracil. Arg-136 is a binding site for (2S)-2-hydroxy-3-oxobutyl phosphate.

This sequence belongs to the DMRL synthase family.

It carries out the reaction (2S)-2-hydroxy-3-oxobutyl phosphate + 5-amino-6-(D-ribitylamino)uracil = 6,7-dimethyl-8-(1-D-ribityl)lumazine + phosphate + 2 H2O + H(+). It participates in cofactor biosynthesis; riboflavin biosynthesis; riboflavin from 2-hydroxy-3-oxobutyl phosphate and 5-amino-6-(D-ribitylamino)uracil: step 1/2. In terms of biological role, catalyzes the formation of 6,7-dimethyl-8-ribityllumazine by condensation of 5-amino-6-(D-ribitylamino)uracil with 3,4-dihydroxy-2-butanone 4-phosphate. This is the penultimate step in the biosynthesis of riboflavin. In Porphyromonas gingivalis (strain ATCC 33277 / DSM 20709 / CIP 103683 / JCM 12257 / NCTC 11834 / 2561), this protein is 6,7-dimethyl-8-ribityllumazine synthase.